A 127-amino-acid chain; its full sequence is Ribonuclease P protein component (127 aa).

It belongs to the RnpA family. Consists of a catalytic RNA component (M1 or rnpB) and a protein subunit.

It carries out the reaction Endonucleolytic cleavage of RNA, removing 5'-extranucleotides from tRNA precursor.. Functionally, RNaseP catalyzes the removal of the 5'-leader sequence from pre-tRNA to produce the mature 5'-terminus. It can also cleave other RNA substrates such as 4.5S RNA. The protein component plays an auxiliary but essential role in vivo by binding to the 5'-leader sequence and broadening the substrate specificity of the ribozyme. This chain is Ribonuclease P protein component, found in Corynebacterium urealyticum (strain ATCC 43042 / DSM 7109).